A 307-amino-acid chain; its full sequence is Pseudouridine-5'-phosphate glycosidase (307 aa).

E28 acts as the Proton donor in catalysis. Substrate contacts are provided by K89 and V109. Mn(2+) is bound at residue D141. 143–145 (SAD) is a substrate binding site. K162 functions as the Nucleophile in the catalytic mechanism.

Belongs to the pseudouridine-5'-phosphate glycosidase family. As to quaternary structure, homotrimer. Requires Mn(2+) as cofactor.

The catalysed reaction is D-ribose 5-phosphate + uracil = psi-UMP + H2O. In terms of biological role, catalyzes the reversible cleavage of pseudouridine 5'-phosphate (PsiMP) to ribose 5-phosphate and uracil. Functions biologically in the cleavage direction, as part of a pseudouridine degradation pathway. The sequence is that of Pseudouridine-5'-phosphate glycosidase from Alkaliphilus metalliredigens (strain QYMF).